The following is a 438-amino-acid chain: ATP-dependent protease ATPase subunit HslU (438 aa).

ATP-binding positions include V18, 60 to 65 (GVGKTE), D252, E317, and R389.

This sequence belongs to the ClpX chaperone family. HslU subfamily. A double ring-shaped homohexamer of HslV is capped on each side by a ring-shaped HslU homohexamer. The assembly of the HslU/HslV complex is dependent on binding of ATP.

It localises to the cytoplasm. Functionally, ATPase subunit of a proteasome-like degradation complex; this subunit has chaperone activity. The binding of ATP and its subsequent hydrolysis by HslU are essential for unfolding of protein substrates subsequently hydrolyzed by HslV. HslU recognizes the N-terminal part of its protein substrates and unfolds these before they are guided to HslV for hydrolysis. This chain is ATP-dependent protease ATPase subunit HslU, found in Saccharophagus degradans (strain 2-40 / ATCC 43961 / DSM 17024).